Reading from the N-terminus, the 492-residue chain is ATP synthase subunit beta, chloroplastic (492 aa).

170 to 177 (GGAGVGKT) provides a ligand contact to ATP.

It belongs to the ATPase alpha/beta chains family. As to quaternary structure, F-type ATPases have 2 components, CF(1) - the catalytic core - and CF(0) - the membrane proton channel. CF(1) has five subunits: alpha(3), beta(3), gamma(1), delta(1), epsilon(1). CF(0) has four main subunits: a(1), b(1), b'(1) and c(9-12).

It is found in the plastid. The protein resides in the chloroplast thylakoid membrane. The enzyme catalyses ATP + H2O + 4 H(+)(in) = ADP + phosphate + 5 H(+)(out). In terms of biological role, produces ATP from ADP in the presence of a proton gradient across the membrane. The catalytic sites are hosted primarily by the beta subunits. The protein is ATP synthase subunit beta, chloroplastic of Huperzia lucidula (Shining clubmoss).